Here is a 220-residue protein sequence, read N- to C-terminus: Transmembrane emp24 domain-containing protein 1 (220 aa).

Residues 1 to 19 (MAWSSSFLFIVLPLAAAVA) form the signal peptide. Residues 20-187 (VQPQDTELTF…LQDSNLERVN (168 aa)) are Extracellular-facing. The 83-residue stretch at 36–118 (QECFYQTTLY…EKLVFFELIF (83 aa)) folds into the GOLD domain. Positions 138–164 (ELLDIKLEDIKESIESVKSRLERSIQM) form a coiled coil. The chain crosses the membrane as a helical span at residues 188–208 (FWSAINVGVLVTVAFLQVYML). At 209–220 (KSLFDDKRKIRT) the chain is on the cytoplasmic side. The COPII vesicle coat-binding motif lies at 211–212 (LF). A COPI vesicle coat-binding motif is present at residues 211 to 220 (LFDDKRKIRT).

Belongs to the EMP24/GP25L family. Homodimer in endoplasmic reticulum, endoplasmic reticulum-Golgi intermediate compartment and cis-Golgi network. Interacts with IL1RL1. Interacts with RNF26; this interaction is important to modulate innate immune signaling through the cGAS-STING pathway.

It is found in the cell membrane. The protein localises to the endoplasmic reticulum membrane. The protein resides in the golgi apparatus. Its subcellular location is the cis-Golgi network membrane. It localises to the endoplasmic reticulum-Golgi intermediate compartment membrane. Its function is as follows. Potential role in vesicular protein trafficking, mainly in the early secretory pathway. May act as a cargo receptor at the lumenal side for incorporation of secretory cargo molecules into transport vesicles and may be involved in vesicle coat formation at the cytoplasmic side. Plays a positive role in IL-33-mediated IL-8 and IL-6 production by interacting with interleukin-33 receptor IL1RL1. Plays also a role in the modulation of innate immune signaling through the cGAS-STING pathway by interacting with RNF26. In Xenopus tropicalis (Western clawed frog), this protein is Transmembrane emp24 domain-containing protein 1 (tmed1).